Reading from the N-terminus, the 271-residue chain is 2-dehydro-3-deoxyphosphooctonate aldolase (271 aa).

Belongs to the KdsA family.

The protein localises to the cytoplasm. The enzyme catalyses D-arabinose 5-phosphate + phosphoenolpyruvate + H2O = 3-deoxy-alpha-D-manno-2-octulosonate-8-phosphate + phosphate. It participates in carbohydrate biosynthesis; 3-deoxy-D-manno-octulosonate biosynthesis; 3-deoxy-D-manno-octulosonate from D-ribulose 5-phosphate: step 2/3. The protein operates within bacterial outer membrane biogenesis; lipopolysaccharide biosynthesis. The protein is 2-dehydro-3-deoxyphosphooctonate aldolase of Campylobacter jejuni subsp. jejuni serotype O:2 (strain ATCC 700819 / NCTC 11168).